The chain runs to 271 residues: Serine protease SP24D (271 aa).

An N-terminal signal peptide occupies residues 1–22 (MTLADRVPLALAALAYLALVSG). The propeptide at 23–49 (VRFHLSEQNDVLPGGSQARRPFFQGAR) is activation peptide. Residues 50-269 (IVGGSVASEG…FVTWIQTTMR (220 aa)) form the Peptidase S1 domain. Cysteine 75 and cysteine 91 are joined by a disulfide. Residues histidine 90 and aspartate 136 each act as charge relay system in the active site. 2 disulfide bridges follow: cysteine 199/cysteine 211 and cysteine 221/cysteine 246. Catalysis depends on serine 225, which acts as the Charge relay system.

Belongs to the peptidase S1 family. Highest level of adult expression is in the thorax.

This chain is Serine protease SP24D (Sp24D), found in Anopheles gambiae (African malaria mosquito).